The chain runs to 309 residues: Fructosamine-3-kinase (309 aa).

Methionine 1 is subject to N-acetylmethionine. An ATP-binding site is contributed by 89–91; sequence EHL. Aspartate 217 (proton acceptor) is an active-site residue.

Belongs to the fructosamine kinase family. In terms of assembly, monomer. Widely expressed. Expressed in erythrocytes.

It catalyses the reaction N(6)-(D-fructosyl)-L-lysyl-[protein] + ATP = N(6)-(3-O-phospho-D-fructosyl)-L-lysyl-[protein] + ADP + H(+). It carries out the reaction N(6)-D-ribulosyl-L-lysyl-[protein] + ATP = N(6)-(3-O-phospho-D-ribulosyl)-L-lysyl-[protein] + ADP + H(+). The catalysed reaction is N(6)-(D-psicosyl)-L-lysyl-[protein] + ATP = N(6)-(3-O-phospho-D-psicosyl)-L-lysyl-[protein] + ADP + H(+). Fructosamine-3-kinase involved in protein deglycation by mediating phosphorylation of fructoselysine residues on glycated proteins, to generate fructoselysine-3 phosphate. Fructoselysine-3 phosphate adducts are unstable and decompose under physiological conditions. Involved in intracellular deglycation in erythrocytes. Involved in the response to oxidative stress by mediating deglycation of NFE2L2/NRF2, glycation impairing NFE2L2/NRF2 function. Also able to phosphorylate psicosamines and ribulosamines. This chain is Fructosamine-3-kinase, found in Homo sapiens (Human).